The primary structure comprises 500 residues: Lysine--tRNA ligase (500 aa).

Glutamate 410 and glutamate 417 together coordinate Mg(2+).

It belongs to the class-II aminoacyl-tRNA synthetase family. In terms of assembly, homodimer. Requires Mg(2+) as cofactor.

The protein localises to the cytoplasm. The catalysed reaction is tRNA(Lys) + L-lysine + ATP = L-lysyl-tRNA(Lys) + AMP + diphosphate. This chain is Lysine--tRNA ligase, found in Pseudomonas putida (strain ATCC 700007 / DSM 6899 / JCM 31910 / BCRC 17059 / LMG 24140 / F1).